Consider the following 153-residue polypeptide: Alpha-amylase type B isozyme (153 aa).

Residues Lys19, 25–27, His38, Gln44, Lys123, and Trp150 each bind substrate; that span reads GWW.

This sequence belongs to the glycosyl hydrolase 13 family. Monomer. Requires Ca(2+) as cofactor.

It catalyses the reaction Endohydrolysis of (1-&gt;4)-alpha-D-glucosidic linkages in polysaccharides containing three or more (1-&gt;4)-alpha-linked D-glucose units.. The chain is Alpha-amylase type B isozyme (AMY1.4) from Hordeum vulgare (Barley).